We begin with the raw amino-acid sequence, 471 residues long: Ribulose bisphosphate carboxylase large chain (471 aa).

Residues Asn-119 and Thr-169 each coordinate substrate. The active-site Proton acceptor is Lys-171. Lys-173 lines the substrate pocket. Lys-197, Asp-199, and Glu-200 together coordinate Mg(2+). Position 197 is an N6-carboxylysine (Lys-197). His-290 acts as the Proton acceptor in catalysis. 3 residues coordinate substrate: Arg-291, His-323, and Ser-375.

This sequence belongs to the RuBisCO large chain family. Type I subfamily. In terms of assembly, heterohexadecamer of 8 large chains and 8 small chains; disulfide-linked. The disulfide link is formed within the large subunit homodimers. It depends on Mg(2+) as a cofactor. The disulfide bond which can form in the large chain dimeric partners within the hexadecamer appears to be associated with oxidative stress and protein turnover.

The protein localises to the carboxysome. It carries out the reaction 2 (2R)-3-phosphoglycerate + 2 H(+) = D-ribulose 1,5-bisphosphate + CO2 + H2O. The enzyme catalyses D-ribulose 1,5-bisphosphate + O2 = 2-phosphoglycolate + (2R)-3-phosphoglycerate + 2 H(+). RuBisCO catalyzes two reactions: the carboxylation of D-ribulose 1,5-bisphosphate, the primary event in carbon dioxide fixation, as well as the oxidative fragmentation of the pentose substrate in the photorespiration process. Both reactions occur simultaneously and in competition at the same active site. This Crocosphaera subtropica (strain ATCC 51142 / BH68) (Cyanothece sp. (strain ATCC 51142)) protein is Ribulose bisphosphate carboxylase large chain.